The chain runs to 177 residues: MLKDLYKSHIVPSLKTKLGYSNVMQVPKIVKVCLNIGLGIRGSDSKVMNSCVRDLALIAGQKPVATYAKKSIAGFKIRKGFPIGCKVTLRNNKMYEFLERLIHVVLPREQDFKGLSVNQFDGCGNLSIGIKEHISFLEIDYDKIDKILGLDINIVTNAVNNNDAKLLLMEFGFPFIN.

Belongs to the universal ribosomal protein uL5 family. In terms of assembly, part of the 50S ribosomal subunit; part of the 5S rRNA/L5/L18/L25 subcomplex. Contacts the 5S rRNA and the P site tRNA. Forms a bridge to the 30S subunit in the 70S ribosome.

Its function is as follows. This is one of the proteins that bind and probably mediate the attachment of the 5S RNA into the large ribosomal subunit, where it forms part of the central protuberance. In the 70S ribosome it contacts protein S13 of the 30S subunit (bridge B1b), connecting the 2 subunits; this bridge is implicated in subunit movement. Contacts the P site tRNA; the 5S rRNA and some of its associated proteins might help stabilize positioning of ribosome-bound tRNAs. This is Large ribosomal subunit protein uL5 from Ehrlichia canis (strain Jake).